Consider the following 137-residue polypeptide: Large ribosomal subunit protein uL16 (137 aa).

It belongs to the universal ribosomal protein uL16 family. In terms of assembly, part of the 50S ribosomal subunit.

Binds 23S rRNA and is also seen to make contacts with the A and possibly P site tRNAs. The sequence is that of Large ribosomal subunit protein uL16 from Streptococcus agalactiae serotype Ia (strain ATCC 27591 / A909 / CDC SS700).